We begin with the raw amino-acid sequence, 197 residues long: Cell division protein SepF (197 aa).

2 disordered regions span residues 38–72 (MPTP…TTPT) and 164–197 (LSRE…AQAQ). The span at 58-72 (TVASNFAMNSNTTPT) shows a compositional bias: polar residues. A compositionally biased stretch (low complexity) spans 170–185 (PATPAAPARPAAPAPA).

It belongs to the SepF family. In terms of assembly, homodimer. Interacts with FtsZ.

The protein localises to the cytoplasm. Functionally, cell division protein that is part of the divisome complex and is recruited early to the Z-ring. Probably stimulates Z-ring formation, perhaps through the cross-linking of FtsZ protofilaments. Its function overlaps with FtsA. The chain is Cell division protein SepF from Picosynechococcus sp. (strain ATCC 27264 / PCC 7002 / PR-6) (Agmenellum quadruplicatum).